Here is a 369-residue protein sequence, read N- to C-terminus: Probable serine/threonine-protein kinase DDB_G0291350 (369 aa).

Residues 22–367 (YTVNRILGEG…QVIERINQII (346 aa)) form the Protein kinase domain. ATP-binding positions include 28 to 36 (LGEGGFSFV) and Lys51. Catalysis depends on Asp159, which acts as the Proton acceptor. Positions 169-225 (NLRRPSNNNNNNNNNNNNNNNNNNNNNNNNNNNNNNNNNNNNNNNNNNNNNNNSEDS) are disordered. Low complexity predominate over residues 175–221 (NNNNNNNNNNNNNNNNNNNNNNNNNNNNNNNNNNNNNNNNNNNNNNN).

It belongs to the protein kinase superfamily. Ser/Thr protein kinase family.

It catalyses the reaction L-seryl-[protein] + ATP = O-phospho-L-seryl-[protein] + ADP + H(+). The catalysed reaction is L-threonyl-[protein] + ATP = O-phospho-L-threonyl-[protein] + ADP + H(+). The sequence is that of Probable serine/threonine-protein kinase DDB_G0291350 from Dictyostelium discoideum (Social amoeba).